The primary structure comprises 375 residues: Chaperone protein DnaJ (375 aa).

The J domain occupies 5-69 (DYYEVLGVGK…QKRAHYDQFG (65 aa)). Residues 132–214 (GKETTIEIPR…CGGTGKVKKR (83 aa)) form a CR-type zinc finger. The Zn(2+) site is built by cysteine 145, cysteine 148, cysteine 162, cysteine 165, cysteine 188, cysteine 191, cysteine 202, and cysteine 205. CXXCXGXG motif repeat units follow at residues 145–152 (CETCSGSG), 162–169 (CSHCGGSG), 188–195 (CHYCNGTG), and 202–209 (CSTCGGTG).

It belongs to the DnaJ family. In terms of assembly, homodimer. The cofactor is Zn(2+).

It localises to the cytoplasm. In terms of biological role, participates actively in the response to hyperosmotic and heat shock by preventing the aggregation of stress-denatured proteins and by disaggregating proteins, also in an autonomous, DnaK-independent fashion. Unfolded proteins bind initially to DnaJ; upon interaction with the DnaJ-bound protein, DnaK hydrolyzes its bound ATP, resulting in the formation of a stable complex. GrpE releases ADP from DnaK; ATP binding to DnaK triggers the release of the substrate protein, thus completing the reaction cycle. Several rounds of ATP-dependent interactions between DnaJ, DnaK and GrpE are required for fully efficient folding. Also involved, together with DnaK and GrpE, in the DNA replication of plasmids through activation of initiation proteins. The sequence is that of Chaperone protein DnaJ from Bacillus licheniformis (strain ATCC 14580 / DSM 13 / JCM 2505 / CCUG 7422 / NBRC 12200 / NCIMB 9375 / NCTC 10341 / NRRL NRS-1264 / Gibson 46).